A 506-amino-acid polypeptide reads, in one-letter code: Probable alpha-L-arabinofuranosidase B (506 aa).

The signal sequence occupies residues 1–26; it reads MLLPRGFNRAVVTALGVVGTGTLVAA. The interval 27 to 343 is catalytic; it reads GPCDIYSSGG…ANIVAAKYAV (317 aa). 3 cysteine pairs are disulfide-bonded: C29–C39, C89–C94, and C184–C185. D227 serves as a coordination point for substrate. Residue E229 is the Nucleophile of the active site. N230 is a binding site for substrate. N285 carries N-linked (GlcNAc...) asparagine glycosylation. G304 is a substrate binding site. D305 (proton donor) is an active-site residue. The tract at residues 344–506 is ABD; the sequence is APLTSGPSLT…VSWVVSTSFA (163 aa). A glycan (N-linked (GlcNAc...) asparagine) is linked at N375. Cysteines 409 and 447 form a disulfide. Substrate-binding residues include H424, F427, D443, H471, L476, and D496.

This sequence belongs to the glycosyl hydrolase 54 family.

The protein localises to the secreted. It catalyses the reaction Hydrolysis of terminal non-reducing alpha-L-arabinofuranoside residues in alpha-L-arabinosides.. It functions in the pathway glycan metabolism; L-arabinan degradation. Alpha-L-arabinofuranosidase involved in the degradation of arabinoxylan, a major component of plant hemicellulose. Able to hydrolyze 1,5-, 1,3- and 1,2-alpha-linkages not only in L-arabinofuranosyl oligosaccharides, but also in polysaccharides containing terminal non-reducing L-arabinofuranoses in side chains, like L-arabinan, arabinogalactan and arabinoxylan. The protein is Probable alpha-L-arabinofuranosidase B (abfB) of Aspergillus terreus (strain NIH 2624 / FGSC A1156).